The following is a 515-amino-acid chain: MTKRALISVSDKSGIVDFAKELKNLGWDIISTGGTKVALDNAGVETIAIDDVTGFPEMMDGRVKTLHPNIHGGLLARRDADSHLQAAKDNNIELIDLVVVNLYPFKETILRPDITYDLAVENIDIGGPSMLRSAAKNHASVTVVVDPADYATVLGELADAGQTTFETRQRLAAKVFRHTAAYDALIAEYFTTQVGEAKPEKLTITYDLKQAMRYGENPQQDADFYQKALPIDYSIASAKQLNGKELSFNNIRDADAAIRIIRDFKDRPTVVVLKHMNPCGIGQADDIETAWDYAYEADPVSIFGGIVVLNREVDAATAKKMHPIFLEIIIAPSYSEEALAILTNKKKNLRILELPFDAQAASEVEAEYTGVVGGLLVQNQDVVAENPSDWQVVTDRQPTEQEATALEFAWKAIKYVKSNGIIITNDHMTLGLGAGQTNRVGSVKIAIEQAKDHLDGAVLASDAFFPFADNIEEIAAAGIKAIIQPGGSVRDQDSIDAANKHGLTMIFTGVRHFRH.

Residues 1 to 145 (MTKRALISVS…KNHASVTVVV (145 aa)) form the MGS-like domain.

The protein belongs to the PurH family.

The catalysed reaction is (6R)-10-formyltetrahydrofolate + 5-amino-1-(5-phospho-beta-D-ribosyl)imidazole-4-carboxamide = 5-formamido-1-(5-phospho-D-ribosyl)imidazole-4-carboxamide + (6S)-5,6,7,8-tetrahydrofolate. It catalyses the reaction IMP + H2O = 5-formamido-1-(5-phospho-D-ribosyl)imidazole-4-carboxamide. It functions in the pathway purine metabolism; IMP biosynthesis via de novo pathway; 5-formamido-1-(5-phospho-D-ribosyl)imidazole-4-carboxamide from 5-amino-1-(5-phospho-D-ribosyl)imidazole-4-carboxamide (10-formyl THF route): step 1/1. It participates in purine metabolism; IMP biosynthesis via de novo pathway; IMP from 5-formamido-1-(5-phospho-D-ribosyl)imidazole-4-carboxamide: step 1/1. This Streptococcus pyogenes serotype M3 (strain ATCC BAA-595 / MGAS315) protein is Bifunctional purine biosynthesis protein PurH.